We begin with the raw amino-acid sequence, 123 residues long: Small ribosomal subunit protein uS12 (123 aa).

Residues M1–P45 form a disordered region. The span at I8–S21 shows a compositional bias: basic residues.

Belongs to the universal ribosomal protein uS12 family. Part of the 30S ribosomal subunit. Contacts proteins S8 and S17. May interact with IF1 in the 30S initiation complex.

Its function is as follows. With S4 and S5 plays an important role in translational accuracy. Interacts with and stabilizes bases of the 16S rRNA that are involved in tRNA selection in the A site and with the mRNA backbone. Located at the interface of the 30S and 50S subunits, it traverses the body of the 30S subunit contacting proteins on the other side and probably holding the rRNA structure together. The combined cluster of proteins S8, S12 and S17 appears to hold together the shoulder and platform of the 30S subunit. In Chlamydia muridarum (strain MoPn / Nigg), this protein is Small ribosomal subunit protein uS12.